The chain runs to 142 residues: Large ribosomal subunit protein uL13 (142 aa).

The protein belongs to the universal ribosomal protein uL13 family. Part of the 50S ribosomal subunit.

In terms of biological role, this protein is one of the early assembly proteins of the 50S ribosomal subunit, although it is not seen to bind rRNA by itself. It is important during the early stages of 50S assembly. The chain is Large ribosomal subunit protein uL13 from Koribacter versatilis (strain Ellin345).